The following is a 666-amino-acid chain: Probable potassium transport system protein Kup (666 aa).

The next 12 helical transmembrane spans lie at 16–36 (GFII…LYTM), 58–78 (ISLI…LIAL), 100–120 (PWLI…GALT), 141–161 (IYQN…VLFG), 165–185 (FGTG…FSFL), 221–241 (IFIL…YSDL), 253–273 (WPFV…WILA), 292–312 (LTVY…QALI), 343–363 (LYIP…VLYF), 373–393 (YGLA…YYLI), 399–419 (PFLA…FFWA), and 424–444 (FMHG…VMFI).

This sequence belongs to the HAK/KUP transporter (TC 2.A.72) family.

It localises to the cell membrane. The enzyme catalyses K(+)(in) + H(+)(in) = K(+)(out) + H(+)(out). Its function is as follows. Transport of potassium into the cell. Likely operates as a K(+):H(+) symporter. In Streptococcus pyogenes serotype M5 (strain Manfredo), this protein is Probable potassium transport system protein Kup.